A 362-amino-acid polypeptide reads, in one-letter code: Large ribosomal subunit protein uL4A (362 aa).

N-acetylserine is present on serine 2. An Omega-N-methylarginine modification is found at arginine 95. The tract at residues 277-362 (PSHIISTSDV…AVFTETLKHD (86 aa)) is C-terminal-extended nuclear localization signal.

This sequence belongs to the universal ribosomal protein uL4 family. Component of the large ribosomal subunit (LSU). Mature yeast ribosomes consist of a small (40S) and a large (60S) subunit. The 40S small subunit contains 1 molecule of ribosomal RNA (18S rRNA) and 33 different proteins (encoded by 57 genes). The large 60S subunit contains 3 rRNA molecules (25S, 5.8S and 5S rRNA) and 46 different proteins (encoded by 81 genes). uL4 is associated with the polypeptide exit tunnel. uL4 interacts with its chaperone ACL4 and the nuclear import receptor KAP104. N-terminally acetylated by acetyltransferase NatA.

It localises to the cytoplasm. It is found in the nucleus. Functionally, component of the ribosome, a large ribonucleoprotein complex responsible for the synthesis of proteins in the cell. The small ribosomal subunit (SSU) binds messenger RNAs (mRNAs) and translates the encoded message by selecting cognate aminoacyl-transfer RNA (tRNA) molecules. The large subunit (LSU) contains the ribosomal catalytic site termed the peptidyl transferase center (PTC), which catalyzes the formation of peptide bonds, thereby polymerizing the amino acids delivered by tRNAs into a polypeptide chain. The nascent polypeptides leave the ribosome through a tunnel in the LSU and interact with protein factors that function in enzymatic processing, targeting, and the membrane insertion of nascent chains at the exit of the ribosomal tunnel. uL4 participates in the regulation of the accumulation of its own mRNA. In Saccharomyces cerevisiae (strain ATCC 204508 / S288c) (Baker's yeast), this protein is Large ribosomal subunit protein uL4A.